A 483-amino-acid polypeptide reads, in one-letter code: Bromoperoxidase-catalase (483 aa).

The tract at residues 1-24 (MTQGPLTTEAGAPVADNQNSETAG) is disordered. Catalysis depends on residues His-54 and Asn-127. Residue Tyr-337 participates in heme binding.

It belongs to the catalase family.

It carries out the reaction 2 H2O2 = O2 + 2 H2O. This chain is Bromoperoxidase-catalase (bca), found in Streptomyces venezuelae (strain ATCC 10712 / CBS 650.69 / DSM 40230 / JCM 4526 / NBRC 13096 / PD 04745).